The sequence spans 193 residues: Peptidyl-tRNA hydrolase (193 aa).

Tyr-16 contacts tRNA. Residue His-21 is the Proton acceptor of the active site. TRNA is bound by residues Phe-67, Asn-69, and Asn-115.

It belongs to the PTH family. In terms of assembly, monomer.

It localises to the cytoplasm. The enzyme catalyses an N-acyl-L-alpha-aminoacyl-tRNA + H2O = an N-acyl-L-amino acid + a tRNA + H(+). In terms of biological role, hydrolyzes ribosome-free peptidyl-tRNAs (with 1 or more amino acids incorporated), which drop off the ribosome during protein synthesis, or as a result of ribosome stalling. Catalyzes the release of premature peptidyl moieties from peptidyl-tRNA molecules trapped in stalled 50S ribosomal subunits, and thus maintains levels of free tRNAs and 50S ribosomes. The polypeptide is Peptidyl-tRNA hydrolase (Psychrobacter cryohalolentis (strain ATCC BAA-1226 / DSM 17306 / VKM B-2378 / K5)).